The following is a 148-amino-acid chain: Protein Turandot Z (148 aa).

A signal peptide spans 1–23 (MYFAIRLSFVLAVLFCLTGNGSA).

The protein belongs to the Turandot family.

It is found in the secreted. Functionally, a humoral factor that may play a role in stress tolerance. The polypeptide is Protein Turandot Z (Drosophila simulans (Fruit fly)).